The following is a 606-amino-acid chain: Diphthine--ammonia ligase (606 aa).

It in the N-terminal section; belongs to the Diphthine--ammonia ligase family. The protein in the C-terminal section; belongs to the RutC family.

The protein localises to the cytoplasm. It is found in the nucleus. The catalysed reaction is diphthine-[translation elongation factor 2] + NH4(+) + ATP = diphthamide-[translation elongation factor 2] + AMP + diphosphate + H(+). The protein operates within protein modification; peptidyl-diphthamide biosynthesis. Functionally, amidase that catalyzes the last step of diphthamide biosynthesis using ammonium and ATP. Diphthamide biosynthesis consists in the conversion of an L-histidine residue in the translation elongation factor eEF-2 (eft201 or eft202) to diphthamide. Has a role in meiosis. In Schizosaccharomyces pombe (strain 972 / ATCC 24843) (Fission yeast), this protein is Diphthine--ammonia ligase (mug71).